Reading from the N-terminus, the 497-residue chain is tRNA (adenine(58)-N(1))-methyltransferase non-catalytic subunit TRM6 (497 aa).

The interval threonine 69–lysine 102 is disordered. A compositionally biased stretch (basic and acidic residues) spans lysine 79–lysine 102. The interval asparagine 94–glutamine 104 is substrate. Threonine 107 carries the post-translational modification Phosphothreonine. Substrate stretches follow at residues lysine 145–tyrosine 154 and arginine 175–histidine 182. Residues serine 276–lysine 354 form a disordered region. A phosphoserine mark is found at serine 298 and serine 305. The segment covering glutamate 311 to lysine 354 has biased composition (basic and acidic residues). Positions 349 and 377 each coordinate substrate. Substrate stretches follow at residues arginine 415 to leucine 423 and glutamine 434 to histidine 441. Positions proline 468–serine 497 are disordered. Residues glutamate 478–serine 497 show a composition bias toward basic and acidic residues.

It belongs to the TRM6/GCD10 family. Heterotetramer; composed of two copies of TRMT6 and two copies of TRMT61A.

The protein localises to the nucleus. Functionally, substrate-binding subunit of tRNA (adenine-N(1)-)-methyltransferase, which catalyzes the formation of N(1)-methyladenine at position 58 (m1A58) in initiator methionyl-tRNA. Together with the TRMT61A catalytic subunit, part of a mRNA N(1)-methyltransferase complex that mediates methylation of adenosine residues at the N(1) position of a small subset of mRNAs: N(1) methylation takes place in tRNA T-loop-like structures of mRNAs and is only present at low stoichiometries. The polypeptide is tRNA (adenine(58)-N(1))-methyltransferase non-catalytic subunit TRM6 (TRMT6) (Bos taurus (Bovine)).